We begin with the raw amino-acid sequence, 463 residues long: MTARRDPKPGAKRLVRAQTLQKQRRAPVGPRAPPPDEEDPRLKCKNCRALGHTVRSTRCPMKCWKAALVPPTLGKKEGKENLKPWKPQVEANPGPLNKDKGEKEERPRQQDPQRKALLHIFSGKPPEKLLPNRKGSTESSVFLRVASRPMPVHTTSKRPCVDPELADRSATEMSGRGSVLASLSPLRKASLRSSSSLGPKERQTGAAADIPQPAVRHQGPEPLLVVKPTHSSREGGCREVPQAASKTHGLLQAVRPQAQDKRPAVTQPGPPAATHSLGLGSNLSFRPGAKRPAQAPIQGCLNFPKKPRLGPFQIPESAIQGGELGALENLQPPPAATELGPSTSPQMGRRTPAQVPGVDRQPPHSRPCLPTAQACTMSHHPAASHDGAQPLRVLFRRLENRRWSSSLLAAPSFHSPEKLGVFLAQSPHVSEKSEGPCVRVPPNVLYEDLQVSSSSEDSDSDLQ.

Disordered stretches follow at residues 1 to 42 (MTAR…DPRL), 67 to 115 (ALVP…PQRK), 150 to 295 (MPVH…PAQA), and 326 to 365 (ALEN…PPHS). Composition is skewed to basic and acidic residues over residues 74 to 83 (GKKEGKENLK), 97 to 114 (NKDK…DPQR), and 159 to 170 (PCVDPELADRSA). Residues 180 to 198 (LASLSPLRKASLRSSSSLG) show a composition bias toward low complexity.

It belongs to the FAM90 family.

In Homo sapiens (Human), this protein is Putative protein FAM90A2P (FAM90A2P).